A 1167-amino-acid chain; its full sequence is ATP-dependent helicase/deoxyribonuclease subunit B (1167 aa).

Positions 1-359 constitute a UvrD-like helicase ATP-binding domain; the sequence is MSLRFLLGRS…IRQTEAYRDL (359 aa). An ATP-binding site is contributed by 8–15; that stretch reads GRSGSGKT. The region spanning 282–588 is the UvrD-like helicase C-terminal domain; the sequence is VNRRHQDKAL…EFALVPPAID (307 aa). Residues C803, C1125, C1128, and C1134 each contribute to the [4Fe-4S] cluster site.

It belongs to the helicase family. AddB/RexB type 1 subfamily. Heterodimer of AddA and AddB. It depends on Mg(2+) as a cofactor. Requires [4Fe-4S] cluster as cofactor.

Functionally, the heterodimer acts as both an ATP-dependent DNA helicase and an ATP-dependent, dual-direction single-stranded exonuclease. Recognizes the chi site generating a DNA molecule suitable for the initiation of homologous recombination. The AddB subunit has 5' -&gt; 3' nuclease activity but not helicase activity. This is ATP-dependent helicase/deoxyribonuclease subunit B from Geobacillus thermodenitrificans (strain NG80-2).